The following is a 289-amino-acid chain: ATP phosphoribosyltransferase (289 aa).

The protein belongs to the ATP phosphoribosyltransferase family. Long subfamily. Requires Mg(2+) as cofactor.

The protein resides in the cytoplasm. The enzyme catalyses 1-(5-phospho-beta-D-ribosyl)-ATP + diphosphate = 5-phospho-alpha-D-ribose 1-diphosphate + ATP. It functions in the pathway amino-acid biosynthesis; L-histidine biosynthesis; L-histidine from 5-phospho-alpha-D-ribose 1-diphosphate: step 1/9. With respect to regulation, feedback inhibited by histidine. Its function is as follows. Catalyzes the condensation of ATP and 5-phosphoribose 1-diphosphate to form N'-(5'-phosphoribosyl)-ATP (PR-ATP). Has a crucial role in the pathway because the rate of histidine biosynthesis seems to be controlled primarily by regulation of HisG enzymatic activity. This is ATP phosphoribosyltransferase from Methanosarcina acetivorans (strain ATCC 35395 / DSM 2834 / JCM 12185 / C2A).